Reading from the N-terminus, the 273-residue chain is Ribosomal RNA small subunit methyltransferase A (273 aa).

Residues asparagine 17, leucine 19, glycine 44, glutamate 65, and asparagine 111 each contribute to the S-adenosyl-L-methionine site.

The protein belongs to the class I-like SAM-binding methyltransferase superfamily. rRNA adenine N(6)-methyltransferase family. RsmA subfamily.

It localises to the cytoplasm. The enzyme catalyses adenosine(1518)/adenosine(1519) in 16S rRNA + 4 S-adenosyl-L-methionine = N(6)-dimethyladenosine(1518)/N(6)-dimethyladenosine(1519) in 16S rRNA + 4 S-adenosyl-L-homocysteine + 4 H(+). Functionally, specifically dimethylates two adjacent adenosines (A1518 and A1519) in the loop of a conserved hairpin near the 3'-end of 16S rRNA in the 30S particle. May play a critical role in biogenesis of 30S subunits. The protein is Ribosomal RNA small subunit methyltransferase A of Buchnera aphidicola subsp. Acyrthosiphon pisum (strain APS) (Acyrthosiphon pisum symbiotic bacterium).